The sequence spans 162 residues: tRNA-specific adenosine deaminase (162 aa).

One can recognise a CMP/dCMP-type deaminase domain in the interval 3 to 115 (DSDKYFMKCA…KNLQKYICCK (113 aa)). Histidine 54 provides a ligand contact to Zn(2+). The active-site Proton donor is the glutamate 56. Residues cysteine 84 and cysteine 87 each coordinate Zn(2+).

It belongs to the cytidine and deoxycytidylate deaminase family. In terms of assembly, homodimer. Zn(2+) serves as cofactor.

It carries out the reaction adenosine(34) in tRNA + H2O + H(+) = inosine(34) in tRNA + NH4(+). In terms of biological role, catalyzes the deamination of adenosine to inosine at the wobble position 34 of tRNA(Arg2). This Buchnera aphidicola subsp. Baizongia pistaciae (strain Bp) protein is tRNA-specific adenosine deaminase.